A 929-amino-acid chain; its full sequence is Bifunctional uridylyltransferase/uridylyl-removing enzyme (929 aa).

The segment at 1-383 (MDSVTTEHKQ…RPTPAKRRVP (383 aa)) is uridylyltransferase. The uridylyl-removing stretch occupies residues 384-739 (DSDDFIVDNN…VGFDEVRGVT (356 aa)). Residues 499–622 (VDEHLIRCVG…VQSVEQMKLL (124 aa)) enclose the HD domain. 2 ACT domains span residues 740–822 (ELTI…VVAR) and 850–927 (VIEV…AVQP).

It belongs to the GlnD family. It depends on Mg(2+) as a cofactor.

The enzyme catalyses [protein-PII]-L-tyrosine + UTP = [protein-PII]-uridylyl-L-tyrosine + diphosphate. It catalyses the reaction [protein-PII]-uridylyl-L-tyrosine + H2O = [protein-PII]-L-tyrosine + UMP + H(+). Its activity is regulated as follows. Uridylyltransferase (UTase) activity is inhibited by glutamine, while glutamine activates uridylyl-removing (UR) activity. Functionally, modifies, by uridylylation and deuridylylation, the PII regulatory proteins (GlnB and homologs), in response to the nitrogen status of the cell that GlnD senses through the glutamine level. Under low glutamine levels, catalyzes the conversion of the PII proteins and UTP to PII-UMP and PPi, while under higher glutamine levels, GlnD hydrolyzes PII-UMP to PII and UMP (deuridylylation). Thus, controls uridylylation state and activity of the PII proteins, and plays an important role in the regulation of nitrogen fixation and metabolism. In Bradyrhizobium diazoefficiens (strain JCM 10833 / BCRC 13528 / IAM 13628 / NBRC 14792 / USDA 110), this protein is Bifunctional uridylyltransferase/uridylyl-removing enzyme.